We begin with the raw amino-acid sequence, 235 residues long: Flavonoid 3',5'-methyltransferase (235 aa).

S-adenosyl-L-methionine contacts are provided by residues Val-51, Glu-73, 75–76, Ser-81, Asp-99, and Ala-128; that span reads GV. Position 151 (Asp-151) interacts with a divalent metal cation. An S-adenosyl-L-methionine-binding site is contributed by Asp-153. Asp-177 and Asn-178 together coordinate a divalent metal cation.

Belongs to the class I-like SAM-binding methyltransferase superfamily. Cation-dependent O-methyltransferase family. CCoAMT subfamily. It depends on a divalent metal cation as a cofactor.

It localises to the cytoplasm. The catalysed reaction is S-adenosyl-L-methionine + a 3'-hydroxyflavonoid = S-adenosyl-L-homocysteine + a 3'-methoxyflavonoid.. It carries out the reaction S-adenosyl-L-methionine + a 5'-hydroxy-3'-methoxyflavonoid = S-adenosyl-L-homocysteine + a 3',5'-dimethoxyflavonoid.. Its pathway is pigment biosynthesis; anthocyanin biosynthesis. Mediates O-methylation of anthocyanins. Anthocyanins are major pigments in grapes: at ripening initiation in red grapevine berries, the exocarp turns color from green to red and then to purple due to the accumulation and extent of methylation of anthocyanins. Catalyzes both 3' and 5' O-methylation of anthocyanins, with a preference for glycosylated substrates. Active on both anthocyanins and flavonols in vitro. Most active with delphinidin 3-glucoside but also acts on cyanidin 3-glucoside, cyanidin, myricetin, quercetin and quercetin 3-glucoside. Not able to methylate flavan type skeletons with chiral centers, such as catechins or dihydroquercetin. The polypeptide is Flavonoid 3',5'-methyltransferase (FAOMT) (Vitis vinifera (Grape)).